The following is a 64-amino-acid chain: Bacteriocin glycocin F (64 aa).

The signal sequence occupies residues 1-21 (MSKLVKTLTISEISKAQNNGG). 2 disulfides stabilise this stretch: cysteine 26/cysteine 49 and cysteine 33/cysteine 42. Serine 39 carries an O-linked (GlcNAc) serine glycan. An S-linked (GlcNAc) cysteine glycan is attached at cysteine 64.

The protein resides in the secreted. Functionally, has antibacterial activity against L.plantarum ATCC 8014. In purified form, the activity is bacteriostatic (IC(50)=2 nM) rather than bactericidal. This chain is Bacteriocin glycocin F, found in Lactiplantibacillus plantarum (Lactobacillus plantarum).